Consider the following 334-residue polypeptide: MKKIRPLTEADVTAESAFFMQRRQVLKALGISAAALSLPSTAQADLFSWFKGNDRPKAPAGKPLEFSQPAAWRSDLALTPEDKVTGYNNFYEFGLDKADPAANAGSLKTEPWTLKISGEVAKPFTLDYDDLTHRFPLEERIYRMRCVEAWSMVVPWIGFPLYKLLAQAQPTSHAKYVAFETLYAPDDMPGQKDRFIGGGLKYPYVEGLRLDEAMHPLTLMTVGVYGKALPPQNGAPIRLIVPWKYGFKGIKSIVSIKLTRERPPTTWNLSAPNEYGFYANVNPHVDHPRWSQATERFIGSGGILDVQRQPTLLFNGYANEVASLYRGLNLRENF.

A signal peptide (tat-type signal) is located at residues 1–44; it reads MKKIRPLTEADVTAESAFFMQRRQVLKALGISAAALSLPSTAQA. Residues N88, 91–92, C146, T181, N233, R238, and 249–251 each bind Mo-molybdopterin; these read YE and GIK.

The protein belongs to the MsrP family. As to quaternary structure, heterodimer of a catalytic subunit (MsrP) and a heme-binding subunit (MsrQ). The cofactor is Mo-molybdopterin. In terms of processing, predicted to be exported by the Tat system. The position of the signal peptide cleavage has not been experimentally proven.

The protein localises to the periplasm. It carries out the reaction L-methionyl-[protein] + a quinone + H2O = L-methionyl-(S)-S-oxide-[protein] + a quinol. It catalyses the reaction L-methionyl-[protein] + a quinone + H2O = L-methionyl-(R)-S-oxide-[protein] + a quinol. Functionally, part of the MsrPQ system that repairs oxidized periplasmic proteins containing methionine sulfoxide residues (Met-O), using respiratory chain electrons. Thus protects these proteins from oxidative-stress damage caused by reactive species of oxygen and chlorine generated by the host defense mechanisms. MsrPQ is essential for the maintenance of envelope integrity under bleach stress, rescuing a wide series of structurally unrelated periplasmic proteins from methionine oxidation, including the primary periplasmic chaperone SurA and the lipoprotein Pal. The catalytic subunit MsrP is non-stereospecific, being able to reduce both (R-) and (S-) diastereoisomers of methionine sulfoxide. The protein is Protein-methionine-sulfoxide reductase catalytic subunit MsrP of Salmonella newport (strain SL254).